A 483-amino-acid polypeptide reads, in one-letter code: Protein DETOXIFICATION 6 (483 aa).

12 helical membrane-spanning segments follow: residues Ala38 to Val58, Gly69 to Ala89, Phe113 to Met133, Ile146 to Val166, Ala187 to Leu207, Gly211 to Val231, Ala263 to Leu283, Val292 to Ala312, Val334 to Ile354, Leu376 to Val396, Ile405 to Leu425, and Leu436 to Ala456.

Belongs to the multi antimicrobial extrusion (MATE) (TC 2.A.66.1) family.

It is found in the membrane. In Arabidopsis thaliana (Mouse-ear cress), this protein is Protein DETOXIFICATION 6.